Here is a 430-residue protein sequence, read N- to C-terminus: Spermatogenic leucine zipper protein 1 (430 aa).

Positions 1–25 (MASSAKSAEMPTISKTVNPTPDPHQ) are disordered. The stretch at 62-102 (EQQTAQKFNNLLKEIKDILKNMAGFEEKITEAKELFEETNI) forms a coiled coil. S107 carries the phosphoserine modification. The tract at residues 166–177 (KINEMLSTNLPV) is helix-loop-helix motif. Positions 178–244 (SLAPEKEDNE…NVQEETMKIR (67 aa)) are basic motif. Coiled-coil stretches lie at residues 214 to 269 (LEEK…KLIK) and 316 to 351 (SLQL…TLQE). Position 258 is a phosphoserine (S258). The leucine-zipper stretch occupies residues 303 to 324 (LEEQVKKLSHDTYSLQLMAALL).

In terms of assembly, interacts with PPP1CC isoform gamma-2. Phosphorylated by MAPK1/ERK2 and MAPK3/ERK1. In terms of tissue distribution, specifically and strongly expressed in the testis. Expressed in several tumor cell lines.

Its subcellular location is the cytoplasm. The protein localises to the nucleus. Its function is as follows. Transcription factor that binds to the DNA sequence 5'-CANNTG-3'(E box) and the G-box motif. May play an important role in the regulation of cell proliferation and differentiation during spermatogenesis. This is Spermatogenic leucine zipper protein 1 (SPZ1) from Homo sapiens (Human).